Consider the following 679-residue polypeptide: Acetyl-coenzyme A synthetase 2 (679 aa).

The segment at 1–32 (MTSSPTHQVVHEANNIKKQETPKEFFERQPRQ) is disordered. Residues 14–30 (NNIKKQETPKEFFERQP) show a composition bias toward basic and acidic residues. CoA is bound by residues 207–210 (RGGK) and threonine 326. ATP is bound by residues 402 to 404 (GEP), 426 to 431 (DTYWQT), aspartate 517, and arginine 532. Position 540 (serine 540) interacts with CoA. Arginine 543 is a binding site for ATP. Arginine 611 contacts CoA.

This sequence belongs to the ATP-dependent AMP-binding enzyme family.

It catalyses the reaction acetate + ATP + CoA = acetyl-CoA + AMP + diphosphate. This Debaryomyces hansenii (strain ATCC 36239 / CBS 767 / BCRC 21394 / JCM 1990 / NBRC 0083 / IGC 2968) (Yeast) protein is Acetyl-coenzyme A synthetase 2 (ACS2).